A 134-amino-acid chain; its full sequence is Small ribosomal subunit protein uS11 (134 aa).

It belongs to the universal ribosomal protein uS11 family. As to quaternary structure, part of the 30S ribosomal subunit. Interacts with proteins S7 and S18. Binds to IF-3.

In terms of biological role, located on the platform of the 30S subunit, it bridges several disparate RNA helices of the 16S rRNA. Forms part of the Shine-Dalgarno cleft in the 70S ribosome. In Micrococcus luteus (strain ATCC 4698 / DSM 20030 / JCM 1464 / CCM 169 / CCUG 5858 / IAM 1056 / NBRC 3333 / NCIMB 9278 / NCTC 2665 / VKM Ac-2230) (Micrococcus lysodeikticus), this protein is Small ribosomal subunit protein uS11.